The following is a 559-amino-acid chain: NXPE family member 3 (559 aa).

A signal peptide spans 1–30 (MWTNFFKLRLFCCLLAVLMVVVLVVNVTQV). Asparagine 26, asparagine 237, and asparagine 346 each carry an N-linked (GlcNAc...) asparagine glycan.

The protein belongs to the NXPE family.

The protein resides in the secreted. The protein is NXPE family member 3 (NXPE3) of Pongo abelii (Sumatran orangutan).